The primary structure comprises 424 residues: UDP-N-acetylglucosamine 1-carboxyvinyltransferase (424 aa).

22-23 (KN) serves as a coordination point for phosphoenolpyruvate. Residue R93 participates in UDP-N-acetyl-alpha-D-glucosamine binding. C117 serves as the catalytic Proton donor. C117 is subject to 2-(S-cysteinyl)pyruvic acid O-phosphothioketal. UDP-N-acetyl-alpha-D-glucosamine-binding positions include 122–126 (RPIDL), D307, and V329.

It belongs to the EPSP synthase family. MurA subfamily.

Its subcellular location is the cytoplasm. It catalyses the reaction phosphoenolpyruvate + UDP-N-acetyl-alpha-D-glucosamine = UDP-N-acetyl-3-O-(1-carboxyvinyl)-alpha-D-glucosamine + phosphate. It functions in the pathway cell wall biogenesis; peptidoglycan biosynthesis. Functionally, cell wall formation. Adds enolpyruvyl to UDP-N-acetylglucosamine. This Chlorobium limicola (strain DSM 245 / NBRC 103803 / 6330) protein is UDP-N-acetylglucosamine 1-carboxyvinyltransferase.